The following is a 266-amino-acid chain: Oxygen-evolving enhancer protein 2-3, chloroplastic (266 aa).

The N-terminal 80 residues, 1 to 80 (MASTQCFLHH…VGSKVSPADA (80 aa)), are a transit peptide targeting the chloroplast.

It belongs to the PsbP family.

It localises to the plastid. The protein resides in the chloroplast thylakoid membrane. May be involved in the regulation of photosystem II. This Nicotiana tabacum (Common tobacco) protein is Oxygen-evolving enhancer protein 2-3, chloroplastic (PSBP3).